A 292-amino-acid polypeptide reads, in one-letter code: Complex I assembly factor TIMMDC1, mitochondrial (292 aa).

Helical transmembrane passes span 146–168 (WSWR…TVYR) and 195–215 (GLLS…VLIL).

The protein belongs to the Tim17/Tim22/Tim23 family. In terms of assembly, associates with the intermediate 315 kDa subcomplex of incompletely assembled complex I.

The protein resides in the mitochondrion membrane. Chaperone protein involved in the assembly of the mitochondrial NADH:ubiquinone oxidoreductase complex (complex I). Participates in constructing the membrane arm of complex I. The sequence is that of Complex I assembly factor TIMMDC1, mitochondrial (timmdc1) from Danio rerio (Zebrafish).